A 178-amino-acid chain; its full sequence is Protein GrpE (178 aa).

Basic and acidic residues predominate over residues Met-1–Thr-11. Residues Met-1–Arg-30 form a disordered region.

Belongs to the GrpE family. As to quaternary structure, homodimer.

It localises to the cytoplasm. Participates actively in the response to hyperosmotic and heat shock by preventing the aggregation of stress-denatured proteins, in association with DnaK and GrpE. It is the nucleotide exchange factor for DnaK and may function as a thermosensor. Unfolded proteins bind initially to DnaJ; upon interaction with the DnaJ-bound protein, DnaK hydrolyzes its bound ATP, resulting in the formation of a stable complex. GrpE releases ADP from DnaK; ATP binding to DnaK triggers the release of the substrate protein, thus completing the reaction cycle. Several rounds of ATP-dependent interactions between DnaJ, DnaK and GrpE are required for fully efficient folding. This is Protein GrpE from Cereibacter sphaeroides (strain ATCC 17023 / DSM 158 / JCM 6121 / CCUG 31486 / LMG 2827 / NBRC 12203 / NCIMB 8253 / ATH 2.4.1.) (Rhodobacter sphaeroides).